Here is a 90-residue protein sequence, read N- to C-terminus: Acylphosphatase (90 aa).

The 88-residue stretch at 3-90 folds into the Acylphosphatase-like domain; that stretch reads QRQFTVYGCV…RVFSDFTIER (88 aa). Active-site residues include Arg-18 and Asn-36.

Belongs to the acylphosphatase family.

It catalyses the reaction an acyl phosphate + H2O = a carboxylate + phosphate + H(+). This chain is Acylphosphatase (acyP), found in Actinobacillus succinogenes (strain ATCC 55618 / DSM 22257 / CCUG 43843 / 130Z).